The following is a 657-amino-acid chain: Methionine--tRNA ligase (657 aa).

The 'HIGH' region motif lies at 13–23; that stretch reads YYPSGNLHIGH. The short motif at 308 to 312 is the 'KMSKS' region element; the sequence is KMSKS. ATP is bound at residue Lys311. The 101-residue stretch at 557-657 folds into the tRNA-binding domain; that stretch reads DFDKVEIKAA…SAIPNGAVIK (101 aa).

This sequence belongs to the class-I aminoacyl-tRNA synthetase family. MetG type 2B subfamily. In terms of assembly, homodimer.

It is found in the cytoplasm. The enzyme catalyses tRNA(Met) + L-methionine + ATP = L-methionyl-tRNA(Met) + AMP + diphosphate. Is required not only for elongation of protein synthesis but also for the initiation of all mRNA translation through initiator tRNA(fMet) aminoacylation. In Staphylococcus aureus (strain MW2), this protein is Methionine--tRNA ligase.